The following is a 612-amino-acid chain: Probable translation initiation factor IF-2 (612 aa).

The 219-residue stretch at 11–229 (LRQPIVVVLG…VLAGLTQRYL (219 aa)) folds into the tr-type G domain. The G1 stretch occupies residues 20–27 (GHVDHGKT). 20 to 27 (GHVDHGKT) lines the GTP pocket. The interval 45-49 (LITQH) is G2. Residues 84-87 (DTPG) form a G3 region. GTP contacts are provided by residues 84–88 (DTPGH) and 138–141 (NKID). Residues 138–141 (NKID) are G4. Residues 207-209 (SAK) are G5.

The protein belongs to the TRAFAC class translation factor GTPase superfamily. Classic translation factor GTPase family. IF-2 subfamily.

In terms of biological role, function in general translation initiation by promoting the binding of the formylmethionine-tRNA to ribosomes. Seems to function along with eIF-2. In Hyperthermus butylicus (strain DSM 5456 / JCM 9403 / PLM1-5), this protein is Probable translation initiation factor IF-2.